The sequence spans 538 residues: Putative cysteine ligase BshC (538 aa).

Positions 460-484 (KINEQIELLERMLKRNVEKKHEVEL) form a coiled coil.

Belongs to the BshC family.

Functionally, involved in bacillithiol (BSH) biosynthesis. May catalyze the last step of the pathway, the addition of cysteine to glucosamine malate (GlcN-Mal) to generate BSH. The sequence is that of Putative cysteine ligase BshC from Bacillus cereus (strain AH187).